The sequence spans 102 residues: Flagellar hook-basal body complex protein FliE (102 aa).

Belongs to the FliE family.

The protein resides in the bacterial flagellum basal body. The chain is Flagellar hook-basal body complex protein FliE from Halalkalibacterium halodurans (strain ATCC BAA-125 / DSM 18197 / FERM 7344 / JCM 9153 / C-125) (Bacillus halodurans).